The sequence spans 600 residues: Aspartate--tRNA(Asp/Asn) ligase (600 aa).

E187 provides a ligand contact to L-aspartate. The interval 211-214 (QIFK) is aspartate. 2 residues coordinate L-aspartate: R233 and H463. An ATP-binding site is contributed by 233-235 (RDE). ATP is bound at residue E497. Residue R504 coordinates L-aspartate. 549 to 552 (GVDR) is a binding site for ATP.

Belongs to the class-II aminoacyl-tRNA synthetase family. Type 1 subfamily. Homodimer.

Its subcellular location is the cytoplasm. It catalyses the reaction tRNA(Asx) + L-aspartate + ATP = L-aspartyl-tRNA(Asx) + AMP + diphosphate. In terms of biological role, aspartyl-tRNA synthetase with relaxed tRNA specificity since it is able to aspartylate not only its cognate tRNA(Asp) but also tRNA(Asn). Reaction proceeds in two steps: L-aspartate is first activated by ATP to form Asp-AMP and then transferred to the acceptor end of tRNA(Asp/Asn). The polypeptide is Aspartate--tRNA(Asp/Asn) ligase (Wolbachia pipientis wMel).